We begin with the raw amino-acid sequence, 511 residues long: Tryptophan 5-halogenase PyrH (511 aa).

The FAD site is built by Gly-10, Ala-13, Ser-36, Val-39, Ile-42, Val-44, and Ala-47. An L-tryptophan-binding site is contributed by Ser-50. The active site involves Lys-75. 3 residues coordinate L-tryptophan: Pro-93, Gln-160, and Gln-163. FAD-binding residues include Val-195 and Leu-345. Chloride is bound by residues Thr-356 and Gly-357. Position 358 (Ile-358) interacts with FAD. L-tryptophan-binding residues include Gly-450 and Tyr-454.

It belongs to the flavin-dependent halogenase family. Bacterial tryptophan halogenase subfamily. As to quaternary structure, homodimer.

The enzyme catalyses L-tryptophan + FADH2 + chloride + O2 = 5-chloro-L-tryptophan + FAD + 2 H2O. The protein operates within antibiotic biosynthesis. Its function is as follows. Involved in the biosynthesis of the antibiotic compound pyrroindomycin B. Catalyzes the chlorination of tryptophan (Trp) at C5 position to yield 5-chloro-L-tryptophan. It is also able to use bromide ions to generate monobrominated Trp, but the brominating activity is only about 75% of the chlorinating activity. The sequence is that of Tryptophan 5-halogenase PyrH from Streptomyces rugosporus.